A 585-amino-acid polypeptide reads, in one-letter code: Potassium-transporting ATPase potassium-binding subunit (585 aa).

12 helical membrane-spanning segments follow: residues 23–43, 85–105, 152–172, 194–214, 275–295, 307–327, 345–365, 367–387, 397–417, 444–464, 502–522, and 547–567; these read GVII…ILSF, FINL…VIMF, FVIT…SMAF, IFDL…LAGI, VEFV…GIVF, VVMF…FAGV, AIGI…STGA, NAAL…GLLL, GVLN…LMVG, LLVV…SSFV, LDGV…LIIA, and VLLI…IIVL.

The protein belongs to the KdpA family. The system is composed of three essential subunits: KdpA, KdpB and KdpC.

It is found in the cell membrane. In terms of biological role, part of the high-affinity ATP-driven potassium transport (or Kdp) system, which catalyzes the hydrolysis of ATP coupled with the electrogenic transport of potassium into the cytoplasm. This subunit binds the extracellular potassium ions and delivers the ions to the membrane domain of KdpB through an intramembrane tunnel. This Thermoplasma acidophilum (strain ATCC 25905 / DSM 1728 / JCM 9062 / NBRC 15155 / AMRC-C165) protein is Potassium-transporting ATPase potassium-binding subunit.